A 125-amino-acid polypeptide reads, in one-letter code: Succinate dehydrogenase assembly factor 3, mitochondrial (125 aa).

Residues 1–30 constitute a mitochondrion transit peptide; that stretch reads MPGKHVSRVRALYRRILLLHRALPPDLKAL.

It belongs to the complex I LYR family. SDHAF3 subfamily. Interacts with Sdhb within an Sdha-Sdhb subcomplex.

The protein localises to the mitochondrion matrix. In terms of biological role, plays an essential role in the assembly of succinate dehydrogenase (SDH), an enzyme complex (also referred to as respiratory complex II) that is a component of both the tricarboxylic acid (TCA) cycle and the mitochondrial electron transport chain, and which couples the oxidation of succinate to fumarate with the reduction of ubiquinone (coenzyme Q) to ubiquinol. Promotes maturation of the iron-sulfur protein subunit Sdhb of the SDH catalytic dimer, protecting it from the deleterious effects of oxidants. May act together with SDHAF1. This chain is Succinate dehydrogenase assembly factor 3, mitochondrial, found in Mus musculus (Mouse).